The following is a 512-amino-acid chain: Cytochrome P450 4d1 (512 aa).

Heme-binding residues include Glu316 and Cys456.

It belongs to the cytochrome P450 family. Heme serves as cofactor.

Its subcellular location is the endoplasmic reticulum membrane. The protein localises to the microsome membrane. Its function is as follows. Involved in the metabolism of insect hormones and in the breakdown of synthetic insecticides. The polypeptide is Cytochrome P450 4d1 (Cyp4d1) (Drosophila simulans (Fruit fly)).